A 103-amino-acid chain; its full sequence is Small ribosomal subunit protein uS10 (103 aa).

The protein belongs to the universal ribosomal protein uS10 family. As to quaternary structure, part of the 30S ribosomal subunit.

Involved in the binding of tRNA to the ribosomes. The chain is Small ribosomal subunit protein uS10 from Ruthia magnifica subsp. Calyptogena magnifica.